The primary structure comprises 95 residues: Large ribosomal subunit protein bL27 (95 aa).

A propeptide spanning residues 1–8 (MEMNLQFF) is cleaved from the precursor. The segment at 1-34 (MEMNLQFFSHHKGGGSTSNGRDSAGRRLGTKRAD) is disordered.

It belongs to the bacterial ribosomal protein bL27 family. In terms of processing, the N-terminus is cleaved by ribosomal processing cysteine protease Prp.

The chain is Large ribosomal subunit protein bL27 from Pediococcus pentosaceus (strain ATCC 25745 / CCUG 21536 / LMG 10740 / 183-1w).